The primary structure comprises 777 residues: Endonuclease MutS2 (777 aa).

328–335 (GPNTGGKT) contributes to the ATP binding site. The Smr domain occupies 702 to 777 (LDLRGKRYEE…GSGATIVIFK (76 aa)).

The protein belongs to the DNA mismatch repair MutS family. MutS2 subfamily. As to quaternary structure, homodimer. Binds to stalled ribosomes, contacting rRNA.

Functionally, endonuclease that is involved in the suppression of homologous recombination and thus may have a key role in the control of bacterial genetic diversity. Acts as a ribosome collision sensor, splitting the ribosome into its 2 subunits. Detects stalled/collided 70S ribosomes which it binds and splits by an ATP-hydrolysis driven conformational change. Acts upstream of the ribosome quality control system (RQC), a ribosome-associated complex that mediates the extraction of incompletely synthesized nascent chains from stalled ribosomes and their subsequent degradation. Probably generates substrates for RQC. The protein is Endonuclease MutS2 of Streptococcus gordonii (strain Challis / ATCC 35105 / BCRC 15272 / CH1 / DL1 / V288).